The sequence spans 830 residues: DNA gyrase subunit A (830 aa).

Positions 34-514 constitute a Topo IIA-type catalytic domain; that stretch reads LPDVRDGLKP…NHSDINMEDL (481 aa). The O-(5'-phospho-DNA)-tyrosine intermediate role is filled by Tyr122. A GyrA-box motif is present at residues 541-547; the sequence is QRRGGKG.

The protein belongs to the type II topoisomerase GyrA/ParC subunit family. As to quaternary structure, heterotetramer, composed of two GyrA and two GyrB chains. In the heterotetramer, GyrA contains the active site tyrosine that forms a transient covalent intermediate with DNA, while GyrB binds cofactors and catalyzes ATP hydrolysis.

The protein resides in the cytoplasm. The catalysed reaction is ATP-dependent breakage, passage and rejoining of double-stranded DNA.. A type II topoisomerase that negatively supercoils closed circular double-stranded (ds) DNA in an ATP-dependent manner to modulate DNA topology and maintain chromosomes in an underwound state. Negative supercoiling favors strand separation, and DNA replication, transcription, recombination and repair, all of which involve strand separation. Also able to catalyze the interconversion of other topological isomers of dsDNA rings, including catenanes and knotted rings. Type II topoisomerases break and join 2 DNA strands simultaneously in an ATP-dependent manner. In Buchnera aphidicola subsp. Acyrthosiphon pisum (strain APS) (Acyrthosiphon pisum symbiotic bacterium), this protein is DNA gyrase subunit A.